The primary structure comprises 210 residues: Dynactin-associated protein (210 aa).

Residues 1–113 (MVADIKGNEQ…YCRNDWSMWK (113 aa)) lie on the Cytoplasmic side of the membrane. Residues 114–134 (VFLACLLACVIMTAIGVLIIC) traverse the membrane as a helical; Signal-anchor for type II membrane protein segment. At 135–210 (LVNNKGSANS…PITVAPTDHL (76 aa)) the chain is on the extracellular side. The disordered stretch occupies residues 168-210 (ACPPTMTTTSTVPASTATESTTSTATAATTSTEPITVAPTDHL). Positions 171–203 (PTMTTTSTVPASTATESTTSTATAATTSTEPIT) are enriched in low complexity.

Interacts with DCTN1 and DCTN2. As to expression, expressed in fibroblast and numerous cancer cell lines (at protein level).

Its subcellular location is the golgi apparatus membrane. It localises to the cell membrane. Functionally, plays a role in the regulation of cell proliferation. Promotes activation of the AKT1 signaling pathway. Promotes phosphorylation of AKT1 at 'Ser-473'. The protein is Dynactin-associated protein (DYNAP) of Homo sapiens (Human).